The following is a 189-amino-acid chain: MIVILNNGGQYVHRIQRSLKYLDVPAKIVPNSTTLEEIAANPEIKGVILSGGPDITKATNCENIALNSELPVLGICLGHQLISKAYGGEVSRADSEEYASIKIYVKQENDLFKGVPSEFTAWASHMDEVKVTPDCFEVLAYSDICGVESIKHKEKSIYGVQFHPEVSHTEYGDIILKNFCKKCGFGFEE.

The 189-residue stretch at 1–189 folds into the Glutamine amidotransferase type-1 domain; the sequence is MIVILNNGGQ…CKKCGFGFEE (189 aa). Cysteine 76 functions as the Nucleophile in the catalytic mechanism. Residues histidine 163 and glutamate 165 contribute to the active site.

In terms of assembly, heterodimer composed of a glutamine amidotransferase subunit (A) and a GMP-binding subunit (B).

The catalysed reaction is XMP + L-glutamine + ATP + H2O = GMP + L-glutamate + AMP + diphosphate + 2 H(+). The protein operates within purine metabolism; GMP biosynthesis; GMP from XMP (L-Gln route): step 1/1. Functionally, catalyzes the synthesis of GMP from XMP. This chain is GMP synthase [glutamine-hydrolyzing] subunit A, found in Methanococcus maripaludis (strain DSM 14266 / JCM 13030 / NBRC 101832 / S2 / LL).